A 325-amino-acid chain; its full sequence is Putative [LysW]-lysine/[LysW]-ornithine hydrolase (325 aa).

His-66 is a binding site for Zn(2+). Asp-68 is a catalytic residue. Asp-90 contributes to the Zn(2+) binding site. Glu-117 serves as the catalytic Proton acceptor. Zn(2+) contacts are provided by Glu-118, Glu-139, and His-297.

The protein belongs to the peptidase M20A family. LysK subfamily. Requires Zn(2+) as cofactor. Co(2+) serves as cofactor.

Its subcellular location is the cytoplasm. It catalyses the reaction [amino-group carrier protein]-C-terminal-gamma-(L-lysyl)-L-glutamate + H2O = [amino-group carrier protein]-C-terminal-L-glutamate + L-lysine. It carries out the reaction [amino-group carrier protein]-C-terminal-gamma-(L-ornithyl)-L-glutamate + H2O = [amino-group carrier protein]-C-terminal-L-glutamate + L-ornithine. It participates in amino-acid biosynthesis; L-lysine biosynthesis via AAA pathway; L-lysine from L-alpha-aminoadipate (Thermus route): step 5/5. Its pathway is amino-acid biosynthesis; L-arginine biosynthesis. Its function is as follows. Catalyzes the release of L-lysine from [LysW]-gamma-L-lysine and the release of L-ornithine from [LysW]-L-ornithine. In Pyrococcus horikoshii (strain ATCC 700860 / DSM 12428 / JCM 9974 / NBRC 100139 / OT-3), this protein is Putative [LysW]-lysine/[LysW]-ornithine hydrolase.